The primary structure comprises 266 residues: Ribosomal RNA small subunit methyltransferase J (266 aa).

S-adenosyl-L-methionine is bound by residues 109 to 110 (RD), 125 to 126 (ER), and D185.

This sequence belongs to the methyltransferase superfamily. RsmJ family.

The protein resides in the cytoplasm. The catalysed reaction is guanosine(1516) in 16S rRNA + S-adenosyl-L-methionine = N(2)-methylguanosine(1516) in 16S rRNA + S-adenosyl-L-homocysteine + H(+). Specifically methylates the guanosine in position 1516 of 16S rRNA. In Cellvibrio japonicus (strain Ueda107) (Pseudomonas fluorescens subsp. cellulosa), this protein is Ribosomal RNA small subunit methyltransferase J.